A 190-amino-acid chain; its full sequence is Guanylate kinase (190 aa).

The Guanylate kinase-like domain maps to 8–188 (GRLVILAGPS…AVKAIEDVLL (181 aa)). 15-22 (GPSAVGKS) provides a ligand contact to ATP.

This sequence belongs to the guanylate kinase family.

It localises to the cytoplasm. It carries out the reaction GMP + ATP = GDP + ADP. Functionally, essential for recycling GMP and indirectly, cGMP. This Corynebacterium glutamicum (strain ATCC 13032 / DSM 20300 / JCM 1318 / BCRC 11384 / CCUG 27702 / LMG 3730 / NBRC 12168 / NCIMB 10025 / NRRL B-2784 / 534) protein is Guanylate kinase.